A 103-amino-acid polypeptide reads, in one-letter code: Small ribosomal subunit protein uS10 (103 aa).

This sequence belongs to the universal ribosomal protein uS10 family. In terms of assembly, part of the 30S ribosomal subunit.

Involved in the binding of tRNA to the ribosomes. The sequence is that of Small ribosomal subunit protein uS10 from Psychrobacter sp. (strain PRwf-1).